The primary structure comprises 127 residues: Protein ApaG (127 aa).

The 125-residue stretch at lysine 3–histidine 127 folds into the ApaG domain.

The polypeptide is Protein ApaG (Methylobacillus flagellatus (strain ATCC 51484 / DSM 6875 / VKM B-1610 / KT)).